An 84-amino-acid polypeptide reads, in one-letter code: ATP synthase subunit c (84 aa).

The next 2 membrane-spanning stretches (helical) occupy residues 10–30 (IAVA…FAIL) and 53–73 (FIVA…ALFF).

Belongs to the ATPase C chain family. In terms of assembly, F-type ATPases have 2 components, F(1) - the catalytic core - and F(0) - the membrane proton channel. F(1) has five subunits: alpha(3), beta(3), gamma(1), delta(1), epsilon(1). F(0) has three main subunits: a(1), b(2) and c(10-14). The alpha and beta chains form an alternating ring which encloses part of the gamma chain. F(1) is attached to F(0) by a central stalk formed by the gamma and epsilon chains, while a peripheral stalk is formed by the delta and b chains.

The protein localises to the cell inner membrane. In terms of biological role, f(1)F(0) ATP synthase produces ATP from ADP in the presence of a proton or sodium gradient. F-type ATPases consist of two structural domains, F(1) containing the extramembraneous catalytic core and F(0) containing the membrane proton channel, linked together by a central stalk and a peripheral stalk. During catalysis, ATP synthesis in the catalytic domain of F(1) is coupled via a rotary mechanism of the central stalk subunits to proton translocation. Its function is as follows. Key component of the F(0) channel; it plays a direct role in translocation across the membrane. A homomeric c-ring of between 10-14 subunits forms the central stalk rotor element with the F(1) delta and epsilon subunits. The polypeptide is ATP synthase subunit c (Shewanella putrefaciens (strain CN-32 / ATCC BAA-453)).